A 95-amino-acid chain; its full sequence is Glycophorin-C (95 aa).

Residues 1–25 lie on the Extracellular side of the membrane; it reads MSSPVRTPPPERLEPNPGMSYAVME. A helical; Signal-anchor for type III membrane protein transmembrane segment spans residues 26-46; that stretch reads IAIIAAVITAVALVLVCLLFL. Residues 47-95 are Cytoplasmic-facing; sequence MLRYLYRHKGTYYTNEAKGTEFAESADAALQSDPALQDAGDTSKKEYFI. Phosphoserine occurs at positions 71, 78, and 89.

It belongs to the glycophorin-C family.

It is found in the cell membrane. In Rattus norvegicus (Rat), this protein is Glycophorin-C (Gypc).